A 389-amino-acid polypeptide reads, in one-letter code: DNA replication and repair protein RecF (389 aa).

30–37 (GPNGFGKT) contributes to the ATP binding site.

This sequence belongs to the RecF family.

The protein resides in the cytoplasm. The RecF protein is involved in DNA metabolism; it is required for DNA replication and normal SOS inducibility. RecF binds preferentially to single-stranded, linear DNA. It also seems to bind ATP. The polypeptide is DNA replication and repair protein RecF (Mycolicibacterium gilvum (strain PYR-GCK) (Mycobacterium gilvum (strain PYR-GCK))).